The following is a 227-amino-acid chain: UPF0173 metal-dependent hydrolase YtkL (227 aa).

Belongs to the UPF0173 family.

The polypeptide is UPF0173 metal-dependent hydrolase YtkL (ytkL) (Bacillus subtilis (strain 168)).